The chain runs to 147 residues: UPF0306 protein YpAngola_A4021 (147 aa).

Belongs to the UPF0306 family.

In Yersinia pestis bv. Antiqua (strain Angola), this protein is UPF0306 protein YpAngola_A4021.